Here is an 837-residue protein sequence, read N- to C-terminus: Tuftelin-interacting protein 11 (837 aa).

Over residues 1–13 (MSLSHLYRDGEGH) the composition is skewed to basic and acidic residues. Disordered regions lie at residues 1 to 31 (MSLSHLYRDGEGHMDDDDDERENFEITDWDL), 54 to 73 (WAERDSDEERPSFGGKRARD), and 85 to 133 (LKKG…KGFA). The required for interaction with DHX15 stretch occupies residues 1 to 50 (MSLSHLYRDGEGHMDDDDDERENFEITDWDLQNEFNPNRQRHWQTKEEAT). Phosphoserine is present on serine 2. The segment covering 14–28 (MDDDDDERENFEITD) has biased composition (acidic residues). The span at 54-64 (WAERDSDEERP) shows a compositional bias: basic and acidic residues. Residues serine 59 and serine 98 each carry the phosphoserine modification. Residues 91 to 102 (EEAELEDSEDEE) show a composition bias toward acidic residues. Residues 103–116 (KPVKQDDFPKDFGP) are compositionally biased toward basic and acidic residues. The residue at position 144 (serine 144) is a Phosphoserine. A G-patch domain is found at 149-195 (TKGIGQKLLQKMGYVPGRGLGKNAQGIINPIEAKQRKGKGAVGAYGS). Disordered stretches follow at residues 183–236 (QRKG…KKKP) and 289–312 (HNVPDDGLPLPSQQPPQPGKEAKA). Phosphoserine is present on serine 210. Residues 217–231 (EFQKELSQWRKDPSG) show a composition bias toward basic and acidic residues. Positions 700-705 (VKDKFN) match the Nuclear localization signal motif. A required for nuclear speckle localization region spans residues 710–734 (IMNRAVSSNVGAYMQPGARENIAYL).

Belongs to the TFP11/STIP family. As to quaternary structure, identified in the spliceosome C complex. Found in the Intron Large (IL) complex, a post-mRNA release spliceosomal complex containing the excised intron, U2, U5 and U6 snRNPs, and splicing factors. Interacts with TUFT1. Interacts with DHX15; indicative for a recruitment of DHX15 to the IL complex. Interacts with GCFC2.

The protein resides in the cytoplasm. Its subcellular location is the nucleus. Functionally, involved in pre-mRNA splicing, specifically in spliceosome disassembly during late-stage splicing events. Intron turnover seems to proceed through reactions in two lariat-intron associated complexes termed Intron Large (IL) and Intron Small (IS). In cooperation with DHX15 seems to mediate the transition of the U2, U5 and U6 snRNP-containing IL complex to the snRNP-free IS complex leading to efficient debranching and turnover of excised introns. May play a role in the differentiation of ameloblasts and odontoblasts or in the forming of the enamel extracellular matrix. This is Tuftelin-interacting protein 11 (TFIP11) from Canis lupus familiaris (Dog).